The chain runs to 455 residues: Anaerobic glycerol-3-phosphate dehydrogenase subunit B (455 aa).

This sequence belongs to the anaerobic G-3-P dehydrogenase subunit B family. As to quaternary structure, composed of a catalytic GlpA/B dimer and of membrane bound GlpC. FMN is required as a cofactor.

The catalysed reaction is a quinone + sn-glycerol 3-phosphate = dihydroxyacetone phosphate + a quinol. The protein operates within polyol metabolism; glycerol degradation via glycerol kinase pathway; glycerone phosphate from sn-glycerol 3-phosphate (anaerobic route): step 1/1. Functionally, conversion of glycerol 3-phosphate to dihydroxyacetone. Uses fumarate or nitrate as electron acceptor. The chain is Anaerobic glycerol-3-phosphate dehydrogenase subunit B from Aliivibrio fischeri (strain ATCC 700601 / ES114) (Vibrio fischeri).